The following is a 679-amino-acid chain: Stress-70 protein, mitochondrial (679 aa).

The transit peptide at 1-46 (MISASRAAAARLVGTTASRSPAAARHQDGWNGLSHEAFRFVSRRDY) directs the protein to the mitochondrion. The interval 1–432 (MISASRAAAA…IQGGVLAGDV (432 aa)) is interaction with NFS1. Positions 63 and 64 each coordinate ADP. Residues 63–431 (TNSCVAVMEG…AIQGGVLAGD (369 aa)) are nucleotide-binding domain (NBD). Lysine 76 carries the N6-acetyllysine modification. Phosphothreonine is present on threonine 87. Lysine 135 and lysine 138 each carry N6-acetyllysine; alternate. Lysine 135 and lysine 138 each carry N6-succinyllysine; alternate. Residue lysine 143 is modified to N6-acetyllysine. Position 206 is an N6-acetyllysine; alternate (lysine 206). The residue at position 206 (lysine 206) is an N6-succinyllysine; alternate. Lysine 206 carries the post-translational modification N6-malonyllysine; alternate. 2 positions are modified to N6-acetyllysine: lysine 234 and lysine 288. Lysine 300 is modified (N6-acetyllysine; alternate). Lysine 300 carries the post-translational modification N6-succinyllysine; alternate. ADP is bound by residues glutamate 313, lysine 316, and serine 320. Residue lysine 360 is modified to N6-acetyllysine; alternate. An N6-succinyllysine; alternate modification is found at lysine 360. Lysine 368 bears the N6-succinyllysine mark. Positions 388 and 391 each coordinate ADP. At lysine 394 the chain carries N6-succinyllysine. Residue serine 408 is modified to Phosphoserine. An interdomain linker region spans residues 432–441 (VTDVLLLDVT). The interaction with FXN and ISCU stretch occupies residues 432 to 679 (VTDVLLLDVT…QKEDQKEEKQ (248 aa)). Positions 442–679 (PLSLGIETLG…QKEDQKEEKQ (238 aa)) are substrate-binding domain (SBD). Position 513 is an omega-N-methylarginine (arginine 513). N6-acetyllysine; alternate occurs at positions 567 and 600. N6-succinyllysine; alternate occurs at positions 567 and 600. Lysine 610 carries the post-translational modification N6-succinyllysine. Position 612 is an N6-acetyllysine (lysine 612). Lysine 646 bears the N6-acetyllysine; alternate mark. Residue lysine 646 is modified to N6-succinyllysine; alternate. A disordered region spans residues 655–679 (MASEREGSGSSSTGEQKEDQKEEKQ). Over residues 669–679 (EQKEDQKEEKQ) the composition is skewed to basic and acidic residues.

This sequence belongs to the heat shock protein 70 family. As to quaternary structure, interacts strongly with the intermediate form of FXN and weakly with its mature form. Interacts with HSCB. Associates with the mitochondrial contact site and cristae organizing system (MICOS) complex, composed of at least MICOS10/MIC10, CHCHD3/MIC19, CHCHD6/MIC25, APOOL/MIC27, IMMT/MIC60, APOO/MIC23/MIC26 and QIL1/MIC13. This complex was also known under the names MINOS or MitOS complex. The MICOS complex associates with mitochondrial outer membrane proteins SAMM50, MTX1, MTX2 and DNAJC11, mitochondrial inner membrane protein TMEM11 and with HSPA9. Interacts with DNLZ, the interaction is required to prevent self-aggregation. Interacts with TESPA1. Interacts with PDPN. Interacts with NFU1, NFS1 and ISCU. Interacts with TP53; the interaction promotes TP53 degradation. Interacts (via SBD domain) with UBXN2A; the interaction with UBXN2A inhibits HSPA9 interaction with and degradation of TP53, thereby promotes TP53 translocation to the nucleus. Interacts with ITPR1 AND VDAC1; this interaction couples ITPR1 to VDAC1. Component of the TIM23 mitochondrial inner membrane pre-sequence translocase complex.

The protein localises to the mitochondrion. The protein resides in the nucleus. Its subcellular location is the nucleolus. It is found in the cytoplasm. It localises to the mitochondrion matrix. The catalysed reaction is ATP + H2O = ADP + phosphate + H(+). Its activity is regulated as follows. The chaperone activity is regulated by ATP-induced allosteric coupling of the nucleotide-binding (NBD) and substrate-binding (SBD) domains. ATP binding in the nucleotide-binding pocket (NBP) leads to a conformational change in the NBD, which is transferred through the interdomain linker (IDL) to the substrate-binding domain (SBD). This elicits a reduced substrate affinity and a faster substrate exchange rate. Upon hydrolysis of ATP to ADP, the protein undergoes a conformational change that increases its affinity for substrate proteins. It cycles through repeated phases of ATP hydrolysis and nucleotide exchange, facilitating repeated cycles of substrate binding and release. Functions in collaboration with co-chaperones. Functions with the co-chaperone, DNLZ, to maintain solubility and regulate ATP hydrolysis. Nucleotide exchange factors, GRPEL1 and GRPEL2, accelerate nucleotide exchange. Its function is as follows. Mitochondrial chaperone that plays a key role in mitochondrial protein import, folding, and assembly. Plays an essential role in the protein quality control system, the correct folding of proteins, the re-folding of misfolded proteins, and the targeting of proteins for subsequent degradation. These processes are achieved through cycles of ATP binding, ATP hydrolysis, and ADP release, mediated by co-chaperones. In mitochondria, it associates with the TIM (translocase of the inner membrane) protein complex to assist in the import and folding of mitochondrial proteins. Plays an important role in mitochondrial iron-sulfur cluster (ISC) biogenesis, interacts with and stabilizes ISC cluster assembly proteins FXN, NFU1, NFS1 and ISCU. Regulates erythropoiesis via stabilization of ISC assembly. Regulates mitochondrial calcium-dependent apoptosis by coupling two calcium channels, ITPR1 and VDAC1, at the mitochondria-associated endoplasmic reticulum (ER) membrane to facilitate calcium transport from the ER lumen to the mitochondria intermembrane space, providing calcium for the downstream calcium channel MCU, which releases it into the mitochondrial matrix. Although primarily located in the mitochondria, it is also found in other cellular compartments. In the cytosol, it associates with proteins involved in signaling, apoptosis, or senescence. It may play a role in cell cycle regulation via its interaction with and promotion of degradation of TP53. May play a role in the control of cell proliferation and cellular aging. Protects against reactive oxygen species (ROS). Extracellular HSPA9 plays a cytoprotective role by preventing cell lysis following immune attack by the membrane attack complex by disrupting formation of the complex. This is Stress-70 protein, mitochondrial from Rattus norvegicus (Rat).